Consider the following 81-residue polypeptide: Protein Vpu (81 aa).

Residues 1 to 7 (MQPLQIL) lie on the Extracellular side of the membrane. Residues 8–28 (AIVALVVAAIIAIVVWTIVYI) form a helical membrane-spanning segment. Residues 29–81 (EYRKILRQRKIDRLIDRITERAEDSGNESEGDQEELSALVERGHLAPWDVDDL) lie on the Cytoplasmic side of the membrane. The tract at residues 50–81 (AEDSGNESEGDQEELSALVERGHLAPWDVDDL) is disordered. Phosphoserine; by host CK2 occurs at positions 53 and 57. Residues 53 to 63 (SGNESEGDQEE) show a composition bias toward acidic residues.

This sequence belongs to the HIV-1 VPU protein family. As to quaternary structure, homopentamer. Interacts with host CD4 and BRTC; these interactions induce proteasomal degradation of CD4. Interacts with host BST2; this interaction leads to the degradation of host BST2. Interacts with host FBXW11. Interacts with host AP1M1; this interaction plays a role in the mistrafficking and subsequent degradation of host BST2. Interacts with host RANBP2; this interaction allows Vpu to down-regulate host BLM sumoylation. Post-translationally, phosphorylated by host CK2. This phosphorylation is necessary for interaction with human BTRC and degradation of CD4.

Its subcellular location is the host membrane. With respect to regulation, ion channel activity is inhibited by hexamethylene amiloride in vitro. Functionally, enhances virion budding by targeting host CD4 and Tetherin/BST2 to proteasome degradation. Degradation of CD4 prevents any unwanted premature interactions between viral Env and its host receptor CD4 in the endoplasmic reticulum. Degradation of antiretroviral protein Tetherin/BST2 is important for virion budding, as BST2 tethers new viral particles to the host cell membrane. Mechanistically, Vpu bridges either CD4 or BST2 to BTRC, a substrate recognition subunit of the Skp1/Cullin/F-box protein E3 ubiquitin ligase, induces their ubiquitination and subsequent proteasomal degradation. The alteration of the E3 ligase specificity by Vpu seems to promote the degradation of host IKBKB, leading to NF-kappa-B down-regulation and subsequent apoptosis. Acts as a viroporin that forms an oligomeric ion channel in membranes. Modulates the host DNA repair mechanisms to promote degradation of nuclear viral cDNA in cells that are already productively infected in order to suppress immune sensing and proviral hyper-integration (superinfection). Manipulates PML-NBs and modulates SUMOylation of host BLM protein thereby enhancing its DNA-end processing activity toward viral unintegrated linear DNA. Also inhibits RAD52-mediated homologous repair of viral cDNA, preventing the generation of dead-end circular forms of single copies of the long terminal repeat and permitting sustained nucleolytic attack. The sequence is that of Protein Vpu from Human immunodeficiency virus type 1 group M subtype B (isolate SF162) (HIV-1).